Here is a 990-residue protein sequence, read N- to C-terminus: Storkhead-box protein 1 (990 aa).

The span at 396-408 shows a compositional bias: basic and acidic residues; it reads TTRHKDSSKEVIG. 4 disordered regions span residues 396–471, 562–586, 712–736, and 809–832; these read TTRH…VHHL, VAKA…PRRV, GLSD…DGGC, and LFSN…SRIP. Positions 416–431 are enriched in basic residues; it reads KSRRRGSSHKGRHKAR. Over residues 809-830 the composition is skewed to polar residues; that stretch reads LFSNAGESPNPDLSDNPGQNSR.

In terms of tissue distribution, detected in sensory epithelial cells of the inner ear but not in adjacent surrounding tissue (at protein level).

Its subcellular location is the nucleus. The protein resides in the cytoplasm. The protein localises to the cytoskeleton. It localises to the microtubule organizing center. It is found in the centrosome. In terms of biological role, involved in regulating the levels of reactive oxidative species and reactive nitrogen species and in mitochondrial homeostasis in the placenta. Required for regulation of inner ear epithelial cell proliferation via the AKT signaling pathway. Involved in cell cycle regulation by binding to the CCNB1 promoter, up-regulating its expression and promoting mitotic entry. Induces phosphorylation of MAPT/tau. The sequence is that of Storkhead-box protein 1 from Mus musculus (Mouse).